Consider the following 321-residue polypeptide: MSTNSIKLLASDVHRGLAELVSKRLGLRLTPSELKRESTGEVQFSIGESVRDEDIFIICQIGSGEVNDRVFELMIMINACKTASARRITVILPNFPYARQDRKDKSRAPITAKLMADMLTTAGCDHVITMDLHASQIQGFFDVPVDNLYAEPSVVRYIKETIDYSEAIIISSDAGGAKRAAGLADRLDLNFELIHKERARANEVSRMVLVVDVTDKICVIVDDMADTCGTLAKAAEVLLDNNAKDVIAIVTHGILSGNAIKNINNSKLKKVVCTNTVPFEDKLKLCLKLDTIDISAVIAESIRRLHNGESISYLFKNAPCK.

Positions 131, 133, 142, and 146 each coordinate Mg(2+).

The protein belongs to the ribose-phosphate pyrophosphokinase family.

It catalyses the reaction D-ribose 5-phosphate + ATP = 5-phospho-alpha-D-ribose 1-diphosphate + AMP + H(+). The polypeptide is Ribose-phosphate pyrophosphokinase 1 (PRS1) (Candida albicans (Yeast)).